We begin with the raw amino-acid sequence, 379 residues long: Cyclic dinucleotide synthase CdnE (379 aa).

4 residues coordinate UTP: Gln-107, Ser-109, Asp-123, and Lys-179. Asp-123 contributes to the Mg(2+) binding site. Asp-193 contacts Mg(2+). UTP-binding residues include Asn-229, Lys-257, and Ser-274. The short motif at 328-330 (KIF) is the Pyrimidine specificity motif (R/Q)xW in donor pocket element.

Belongs to the CD-NTase family. E02 subfamily. Requires Mg(2+) as cofactor.

It catalyses the reaction 2 UTP = c-di-UMP + 2 diphosphate. It carries out the reaction UTP + ATP = 3',3'-cUAMP + 2 diphosphate. The enzyme catalyses UTP + CTP = cyclic CMP-UMP + 2 diphosphate. Its function is as follows. Cyclic nucleotide synthase (second messenger synthase) of a CBASS antivirus system. CBASS (cyclic oligonucleotide-based antiphage signaling system) provides immunity against bacteriophage. The CD-NTase protein synthesizes cyclic nucleotides in response to infection; these serve as specific second messenger signals. The signals activate a diverse range of effectors, leading to bacterial cell death and thus abortive phage infection. The effector protein for this system is membrane protein Cap15. A type I-B(UU) CBASS system. In terms of biological role, cyclic dinucleotide synthase that preferentially catalyzes the synthesis of 3',3'-cyclic UMP-UMP (c-di-UMP) and 3',3'-cyclic UMP-AMP, with minor amounts of 3',3'-cyclic UMP-CMP, which are second messengers for cell signal transduction. Protects E.coli against phage infection. When the CBASS operon (cap15-cdnE) is introduced in E.coli MG1655 it protects against phages T2, T4, T5, T6, SECPhi4, SECPhi6, SECPhi17, SECPhi18 and SECPhi27, but not against phage T7. In Yersinia aleksiciae, this protein is Cyclic dinucleotide synthase CdnE.